A 931-amino-acid chain; its full sequence is Bifunctional glutamine synthetase adenylyltransferase/adenylyl-removing enzyme (931 aa).

The tract at residues 1 to 434 (MTLAPADLPV…STEFAALLAP (434 aa)) is adenylyl removase. An adenylyl transferase region spans residues 441 to 931 (PDALANYWRS…ACRAAELPFA (491 aa)).

Belongs to the GlnE family. It depends on Mg(2+) as a cofactor.

It carries out the reaction [glutamine synthetase]-O(4)-(5'-adenylyl)-L-tyrosine + phosphate = [glutamine synthetase]-L-tyrosine + ADP. It catalyses the reaction [glutamine synthetase]-L-tyrosine + ATP = [glutamine synthetase]-O(4)-(5'-adenylyl)-L-tyrosine + diphosphate. In terms of biological role, involved in the regulation of glutamine synthetase GlnA, a key enzyme in the process to assimilate ammonia. When cellular nitrogen levels are high, the C-terminal adenylyl transferase (AT) inactivates GlnA by covalent transfer of an adenylyl group from ATP to specific tyrosine residue of GlnA, thus reducing its activity. Conversely, when nitrogen levels are low, the N-terminal adenylyl removase (AR) activates GlnA by removing the adenylyl group by phosphorolysis, increasing its activity. The regulatory region of GlnE binds the signal transduction protein PII (GlnB) which indicates the nitrogen status of the cell. This is Bifunctional glutamine synthetase adenylyltransferase/adenylyl-removing enzyme from Stenotrophomonas maltophilia (strain K279a).